We begin with the raw amino-acid sequence, 142 residues long: Cellulose/chitin binding protein BQ2027_MB2009 (142 aa).

The signal sequence occupies residues 1 to 37 (MAGLNIYVRRWRTALHATVSALIVAILGLAITPVASA). One can recognise a CBM2 domain in the interval 38 to 142 (ATARATLSVT…CLLNGQYPCT (105 aa)).

The protein localises to the secreted. It localises to the cell wall. Its subcellular location is the cell membrane. In terms of biological role, carbohydrate binding protein that binds chitin and cellulose. Lacks enzymatic activity and does not hydrolyze chitin and cellulose. May interact with mycobacterial biofilms, which are rich in cellulose, and play a role in biofilm formation. Could also act as an adhesin, improving the initial attachment to host cells and aiding M.bovis during the initial stages of infection. Its function is as follows. May act as a virulence factor that modulates host immune responses and contributes to host immune evasion. This chain is Cellulose/chitin binding protein BQ2027_MB2009, found in Mycobacterium bovis (strain ATCC BAA-935 / AF2122/97).